We begin with the raw amino-acid sequence, 383 residues long: Phosphoenolpyruvate/phosphate translocator 2, chloroplastic (383 aa).

The N-terminal 55 residues, 1–55 (MFALTFLNPNPRLPSPLFLAKSTPESALSRRSRAFSSSNSYPWRPNLRFNGFKLK), are a transit peptide targeting the chloroplast. 8 consecutive transmembrane segments (helical) span residues 76 to 96 (GLKL…YNIF), 108 to 128 (ATVT…MWLL), 143 to 163 (VIVQ…VSLG), 179 to 199 (FFTV…WIVC), 210 to 232 (LASF…SNVT), 253 to 273 (INLF…LAIL), 299 to 319 (IMSL…YMIL), and 350 to 369 (VSPL…YLYS). An EamA domain is found at 93–212 (YNIFNKQVLR…PIVAGVSLAS (120 aa)).

Belongs to the TPT transporter family. PPT (TC 2.A.7.9) subfamily. As to expression, widely expressed in leaves throughout development. In flowers, expressed in sepals and pistils.

It localises to the plastid. The protein localises to the chloroplast membrane. Phosphoenolpyruvate/phosphate translocator that transports phosphoenolpyruvate (PEP), 2-phosphoglycerate and 3-phosphoglycerate. This chain is Phosphoenolpyruvate/phosphate translocator 2, chloroplastic (PPT2), found in Arabidopsis thaliana (Mouse-ear cress).